A 275-amino-acid polypeptide reads, in one-letter code: NH(3)-dependent NAD(+) synthetase (275 aa).

Position 47-54 (47-54 (GISGGQDS)) interacts with ATP. D53 lines the Mg(2+) pocket. Residue R141 participates in deamido-NAD(+) binding. T161 is an ATP binding site. A Mg(2+)-binding site is contributed by E166. Positions 174 and 181 each coordinate deamido-NAD(+). K190 and T212 together coordinate ATP. 261 to 262 (HK) is a binding site for deamido-NAD(+).

The protein belongs to the NAD synthetase family. As to quaternary structure, homodimer.

The enzyme catalyses deamido-NAD(+) + NH4(+) + ATP = AMP + diphosphate + NAD(+) + H(+). It functions in the pathway cofactor biosynthesis; NAD(+) biosynthesis; NAD(+) from deamido-NAD(+) (ammonia route): step 1/1. Its function is as follows. Catalyzes the ATP-dependent amidation of deamido-NAD to form NAD. Uses ammonia as a nitrogen source. The polypeptide is NH(3)-dependent NAD(+) synthetase (Latilactobacillus sakei subsp. sakei (strain 23K) (Lactobacillus sakei subsp. sakei)).